The chain runs to 254 residues: Homeobox protein Dlx4b (254 aa).

Residues 129–188 (IRKPRTIYSSVQLQALHQRFQQTQYLALPERADLAAKLGLTQTQVKIWFQNKRSKYKKIM) constitute a DNA-binding region (homeobox).

It belongs to the distal-less homeobox family.

The protein localises to the nucleus. In terms of biological role, during larvae development, may be important for neurocranium morphogenesis. The sequence is that of Homeobox protein Dlx4b (dlx4b) from Danio rerio (Zebrafish).